A 492-amino-acid polypeptide reads, in one-letter code: Bifunctional protein GlmU (492 aa).

The segment at 1–238 (MRDAAVVILA…AALVAGVNDR (238 aa)) is pyrophosphorylase. UDP-N-acetyl-alpha-D-glucosamine-binding positions include 9 to 12 (LAAG), lysine 23, glutamine 80, and 85 to 86 (GT). Aspartate 111 is a binding site for Mg(2+). UDP-N-acetyl-alpha-D-glucosamine contacts are provided by glycine 148, glutamate 163, asparagine 178, and asparagine 236. Asparagine 236 serves as a coordination point for Mg(2+). The linker stretch occupies residues 239 to 259 (VQLADLAAVLNRRIVEGHQRA). The tract at residues 260–492 (GVTIIDPAST…EDQGPEATGE (233 aa)) is N-acetyltransferase. Arginine 341 and lysine 359 together coordinate UDP-N-acetyl-alpha-D-glucosamine. Residue histidine 371 is the Proton acceptor of the active site. UDP-N-acetyl-alpha-D-glucosamine contacts are provided by tyrosine 374 and asparagine 385. Residues alanine 388, 394-395 (NY), serine 413, and alanine 431 each bind acetyl-CoA. Residues 469 to 483 (EAAAAAGAGAGAAAE) are compositionally biased toward low complexity. Residues 469 to 492 (EAAAAAGAGAGAAAEDQGPEATGE) form a disordered region.

The protein in the N-terminal section; belongs to the N-acetylglucosamine-1-phosphate uridyltransferase family. In the C-terminal section; belongs to the transferase hexapeptide repeat family. In terms of assembly, homotrimer. Requires Mg(2+) as cofactor.

It is found in the cytoplasm. The enzyme catalyses alpha-D-glucosamine 1-phosphate + acetyl-CoA = N-acetyl-alpha-D-glucosamine 1-phosphate + CoA + H(+). The catalysed reaction is N-acetyl-alpha-D-glucosamine 1-phosphate + UTP + H(+) = UDP-N-acetyl-alpha-D-glucosamine + diphosphate. It functions in the pathway nucleotide-sugar biosynthesis; UDP-N-acetyl-alpha-D-glucosamine biosynthesis; N-acetyl-alpha-D-glucosamine 1-phosphate from alpha-D-glucosamine 6-phosphate (route II): step 2/2. The protein operates within nucleotide-sugar biosynthesis; UDP-N-acetyl-alpha-D-glucosamine biosynthesis; UDP-N-acetyl-alpha-D-glucosamine from N-acetyl-alpha-D-glucosamine 1-phosphate: step 1/1. Its pathway is bacterial outer membrane biogenesis; LPS lipid A biosynthesis. Catalyzes the last two sequential reactions in the de novo biosynthetic pathway for UDP-N-acetylglucosamine (UDP-GlcNAc). The C-terminal domain catalyzes the transfer of acetyl group from acetyl coenzyme A to glucosamine-1-phosphate (GlcN-1-P) to produce N-acetylglucosamine-1-phosphate (GlcNAc-1-P), which is converted into UDP-GlcNAc by the transfer of uridine 5-monophosphate (from uridine 5-triphosphate), a reaction catalyzed by the N-terminal domain. This chain is Bifunctional protein GlmU, found in Mycolicibacterium vanbaalenii (strain DSM 7251 / JCM 13017 / BCRC 16820 / KCTC 9966 / NRRL B-24157 / PYR-1) (Mycobacterium vanbaalenii).